A 222-amino-acid chain; its full sequence is Cytidylate kinase (222 aa).

Position 9–17 (G9–T17) interacts with ATP.

The protein belongs to the cytidylate kinase family. Type 1 subfamily.

It localises to the cytoplasm. It catalyses the reaction CMP + ATP = CDP + ADP. It carries out the reaction dCMP + ATP = dCDP + ADP. In Thermosipho africanus (strain TCF52B), this protein is Cytidylate kinase.